The primary structure comprises 231 residues: MKNAPLTLNFGSVRLPVSADGLLHAPTAQQQLGLTQSWEAALVEHGLPETYRDFGAGPEAAVSVPDFVALAFALDTPEARRWQKRARELLARAMQGDVRVAAQIAERNPEPDARRWLAARLESTGARRELLATVARHGGEGRVYGQLGSISNRTVLGKDSASVRQERGVKATRDGLTSAELLRLAYIDTVTARAIQESEARGNAAILTLHEQVARSERQSWERAGQVQRVG.

In terms of assembly, homodimer.

Its subcellular location is the cytoplasm. The protein resides in the nucleoid. Functionally, appears to contribute to D.radiodurans capacity to survive exposure to ionizing radiation. Likely functions as a DNA damage-induced nucleoid-associated protein (NAP) that contributes to the enhanced level of nucleoid compaction after irradiation by bridging DNA duplexes, thereby limiting the dispersion of the fragmented genome immediately after irradiation to facilitate subsequent DNA repair. In vitro, binds both ssDNA and dsDNA, and is able to compact circular DNA, circularize linear DNA, anneal complementary DNA strands and protect DNA from nucleases. In Deinococcus radiodurans (strain ATCC 13939 / DSM 20539 / JCM 16871 / CCUG 27074 / LMG 4051 / NBRC 15346 / NCIMB 9279 / VKM B-1422 / R1), this protein is DNA damage response protein C.